A 106-amino-acid polypeptide reads, in one-letter code: Iron-sulfur cluster assembly protein CyaY (106 aa).

It belongs to the frataxin family.

Functionally, involved in iron-sulfur (Fe-S) cluster assembly. May act as a regulator of Fe-S biogenesis. This Escherichia coli (strain SMS-3-5 / SECEC) protein is Iron-sulfur cluster assembly protein CyaY.